We begin with the raw amino-acid sequence, 236 residues long: Ubiquinone biosynthesis O-methyltransferase (236 aa).

The S-adenosyl-L-methionine site is built by R39, G59, D80, and M124.

It belongs to the methyltransferase superfamily. UbiG/COQ3 family.

It carries out the reaction a 3-demethylubiquinol + S-adenosyl-L-methionine = a ubiquinol + S-adenosyl-L-homocysteine + H(+). The enzyme catalyses a 3-(all-trans-polyprenyl)benzene-1,2-diol + S-adenosyl-L-methionine = a 2-methoxy-6-(all-trans-polyprenyl)phenol + S-adenosyl-L-homocysteine + H(+). It participates in cofactor biosynthesis; ubiquinone biosynthesis. O-methyltransferase that catalyzes the 2 O-methylation steps in the ubiquinone biosynthetic pathway. This is Ubiquinone biosynthesis O-methyltransferase from Shewanella oneidensis (strain ATCC 700550 / JCM 31522 / CIP 106686 / LMG 19005 / NCIMB 14063 / MR-1).